The chain runs to 476 residues: 3-isopropylmalate dehydratase large subunit (476 aa).

[4Fe-4S] cluster-binding residues include cysteine 357, cysteine 417, and cysteine 420.

Belongs to the aconitase/IPM isomerase family. LeuC type 1 subfamily. As to quaternary structure, heterodimer of LeuC and LeuD. [4Fe-4S] cluster is required as a cofactor.

The enzyme catalyses (2R,3S)-3-isopropylmalate = (2S)-2-isopropylmalate. It functions in the pathway amino-acid biosynthesis; L-leucine biosynthesis; L-leucine from 3-methyl-2-oxobutanoate: step 2/4. Its function is as follows. Catalyzes the isomerization between 2-isopropylmalate and 3-isopropylmalate, via the formation of 2-isopropylmaleate. The chain is 3-isopropylmalate dehydratase large subunit from Mycobacterium avium (strain 104).